Consider the following 469-residue polypeptide: MSLLPYAWAKAQRALLRPGEHGATLLVSPRTPGWAISEVRQRHAPASLESVRDDELDTLLASAYSDTGSAAAVVGAAESEVDLDRLMDDIPEVTDLLDTQDGAPVIRMINALLTQAARDEASDIHIEPFETHSVVRYRVDGALRDVVAPRKALHAALVSRIKIMAQLDIAEKRLPQDGRIALRVAGRPIDIRVSTVPTGHGERVVMRLLDKQAGRLRLETLGMAPGVLAPLDNLIRQPHGIVLVTGPTGSGKTTTLYAALARLDASTSNILTVEDPVEYDLPGISQIQVNARIDMTFAVALRAILRQDPDIIMIGEIRDLETAQIAVQASLTGHLVLATLHTNDAVSAVTRLVDMGVEPFLLASSMLGVLAQRLVRRLCTHCRVEEDGGWRAVGCPACNQTGYSGRTGIHELFVIDDEIRRLVHQGRAEQDLREAARAAGMRSMREDGERWIASGSTTLEEILRVTRDA.

ATP is bound at residue 246 to 253 (GPTGSGKT).

Belongs to the GSP E family.

It localises to the cytoplasm. The catalysed reaction is ATP + H2O + cellular proteinSide 1 = ADP + phosphate + cellular proteinSide 2.. Its function is as follows. ATPase component of the type II secretion system required for the energy-dependent secretion of extracellular factors from the periplasm. Acts as a molecular motor to provide the energy that is required for the export of proteins. The Hxc system is involved in the secretion of low-molecular-weight alkaline phosphatase L-AP (LapA). Is probably also involved in the secretion of the phosphate-binding protein PstS. This chain is Type II secretion system protein HxcR, found in Pseudomonas aeruginosa (strain ATCC 15692 / DSM 22644 / CIP 104116 / JCM 14847 / LMG 12228 / 1C / PRS 101 / PAO1).